The sequence spans 942 residues: Inter alpha-trypsin inhibitor, heavy chain 4 (942 aa).

An N-terminal signal peptide occupies residues 1–28 (MKSPAPAHMWNLVLFLPSLLAVLPTTTA). One can recognise a VIT domain in the interval 29–148 (EKNGIDIYSL…KITFELIYQE (120 aa)). Residue Asn-81 is glycosylated (N-linked (GlcNAc...) asparagine). The VWFA domain maps to 274–457 (NVIFVIDKSG…LQLQDFYHEV (184 aa)). Residues Asn-517 and Asn-577 are each glycosylated (N-linked (GlcNAc...) asparagine). Residues 552–586 (TIQQQLEQRISASGAELEALEAQVLNLSLKYNFVT) are a coiled coil. 2 disordered regions span residues 658–698 (RQYI…SDFS) and 726–745 (EKSKESTIPEESPNPDHPQV). Positions 663-690 (PGFPGPPGPPGFPAPPGPPGFPAPPGPP) are enriched in pro residues. A glycan (O-linked (GalNAc...) threonine) is linked at Thr-732. The cysteines at positions 761 and 937 are disulfide-linked. An N-linked (GlcNAc...) asparagine glycan is attached at Asn-874.

It belongs to the ITIH family. As to quaternary structure, interacts (via C-terminus) with DNAJC1 (via SANT 2 domain). May be O-glycosylated. N-glycosylated. Highly expressed in liver. Weak expression in lung and heart.

The protein resides in the secreted. Its function is as follows. Type II acute-phase protein (APP) involved in inflammatory responses to trauma. May also play a role in liver development or regeneration. The sequence is that of Inter alpha-trypsin inhibitor, heavy chain 4 (Itih4) from Mus musculus (Mouse).